Here is a 265-residue protein sequence, read N- to C-terminus: Phosphonates import ATP-binding protein PhnC 1 (265 aa).

An ABC transporter domain is found at 7–252 (IEVSNLSKSF…KLNEIYGTAA (246 aa)). ATP is bound at residue 39–46 (GASGSGKS).

Belongs to the ABC transporter superfamily. Phosphonates importer (TC 3.A.1.9.1) family. The complex is composed of two ATP-binding proteins (PhnC), two transmembrane proteins (PhnE) and a solute-binding protein (PhnD).

Its subcellular location is the cell inner membrane. The enzyme catalyses phosphonate(out) + ATP + H2O = phosphonate(in) + ADP + phosphate + H(+). Its function is as follows. Part of the ABC transporter complex PhnCDE involved in phosphonates import. Responsible for energy coupling to the transport system. This chain is Phosphonates import ATP-binding protein PhnC 1, found in Nostoc sp. (strain PCC 7120 / SAG 25.82 / UTEX 2576).